Consider the following 292-residue polypeptide: 4-hydroxy-tetrahydrodipicolinate synthase 2 (292 aa).

A pyruvate-binding site is contributed by Thr46. Tyr134 serves as the catalytic Proton donor/acceptor. The Schiff-base intermediate with substrate role is filled by Lys162. Val204 serves as a coordination point for pyruvate.

Belongs to the DapA family. As to quaternary structure, homotetramer; dimer of dimers.

The protein localises to the cytoplasm. It carries out the reaction L-aspartate 4-semialdehyde + pyruvate = (2S,4S)-4-hydroxy-2,3,4,5-tetrahydrodipicolinate + H2O + H(+). The protein operates within amino-acid biosynthesis; L-lysine biosynthesis via DAP pathway; (S)-tetrahydrodipicolinate from L-aspartate: step 3/4. Functionally, catalyzes the condensation of (S)-aspartate-beta-semialdehyde [(S)-ASA] and pyruvate to 4-hydroxy-tetrahydrodipicolinate (HTPA). In Halalkalibacterium halodurans (strain ATCC BAA-125 / DSM 18197 / FERM 7344 / JCM 9153 / C-125) (Bacillus halodurans), this protein is 4-hydroxy-tetrahydrodipicolinate synthase 2.